The following is a 332-amino-acid chain: Probable xyloglucan endotransglucosylase/hydrolase protein 28 (332 aa).

A signal peptide spans 1 to 22 (MGFITRFLVFMSLFTSLVSGFA). Residues 23–223 (LQKLPLIQFD…YKYAPYVSQF (201 aa)) form the GH16 domain. Catalysis depends on E108, which acts as the Nucleophile. E112 (proton donor) is an active-site residue. Residues E112 and 125 to 127 (QTN) each bind xyloglucan. The N-linked (GlcNAc...) asparagine glycan is linked to N131. Xyloglucan-binding positions include 135-139 (HLGRE), 202-203 (KW), G207, and R282. C277 and C290 are oxidised to a cystine. The segment covering 313–326 (HGHRRGKHRSRSRL) has biased composition (basic residues). The interval 313–332 (HGHRRGKHRSRSRLARTESI) is disordered.

Belongs to the glycosyl hydrolase 16 family. XTH group 3 subfamily. In terms of processing, contains at least one intrachain disulfide bond essential for its enzymatic activity. Expressed in 7 day old seedlings, roots, rosette leaves, internodes between nodes bearing axillary shoots, nodes bearing flowers, flower buds and siliques.

The protein resides in the secreted. Its subcellular location is the cell wall. It localises to the extracellular space. The protein localises to the apoplast. The enzyme catalyses breaks a beta-(1-&gt;4) bond in the backbone of a xyloglucan and transfers the xyloglucanyl segment on to O-4 of the non-reducing terminal glucose residue of an acceptor, which can be a xyloglucan or an oligosaccharide of xyloglucan.. Functionally, catalyzes xyloglucan endohydrolysis (XEH) and/or endotransglycosylation (XET). Cleaves and religates xyloglucan polymers, an essential constituent of the primary cell wall, and thereby participates in cell wall construction of growing tissues. This is Probable xyloglucan endotransglucosylase/hydrolase protein 28 (XTH28) from Arabidopsis thaliana (Mouse-ear cress).